We begin with the raw amino-acid sequence, 251 residues long: Probable transcriptional regulatory protein Cgl1663/cg1872 (251 aa).

The tract at residues 1-22 is disordered; sequence MSGHSKWATTKHKKAANDAKRG.

It belongs to the TACO1 family.

The protein localises to the cytoplasm. The protein is Probable transcriptional regulatory protein Cgl1663/cg1872 of Corynebacterium glutamicum (strain ATCC 13032 / DSM 20300 / JCM 1318 / BCRC 11384 / CCUG 27702 / LMG 3730 / NBRC 12168 / NCIMB 10025 / NRRL B-2784 / 534).